The chain runs to 62 residues: Large ribosomal subunit protein uL30 (62 aa).

Belongs to the universal ribosomal protein uL30 family. In terms of assembly, part of the 50S ribosomal subunit.

In Thioalkalivibrio sulfidiphilus (strain HL-EbGR7), this protein is Large ribosomal subunit protein uL30.